Reading from the N-terminus, the 508-residue chain is Pyruvate kinase 2 (508 aa).

Arg50 lines the substrate pocket. Positions 52, 54, 85, and 86 each coordinate K(+). Residue 52-55 participates in ATP binding; it reads NFSH. Positions 92 and 178 each coordinate ATP. Glu243 lines the Mg(2+) pocket. The substrate site is built by Gly266, Asp267, and Thr299. Asp267 is a binding site for Mg(2+).

The protein belongs to the pyruvate kinase family. As to quaternary structure, homotetramer. The cofactor is Mg(2+). K(+) is required as a cofactor.

It catalyses the reaction pyruvate + ATP = phosphoenolpyruvate + ADP + H(+). It functions in the pathway carbohydrate degradation; glycolysis; pyruvate from D-glyceraldehyde 3-phosphate: step 5/5. This is Pyruvate kinase 2 (PYK2) from Candida glabrata (strain ATCC 2001 / BCRC 20586 / JCM 3761 / NBRC 0622 / NRRL Y-65 / CBS 138) (Yeast).